A 245-amino-acid polypeptide reads, in one-letter code: 1-(5-phosphoribosyl)-5-[(5-phosphoribosylamino)methylideneamino] imidazole-4-carboxamide isomerase (245 aa).

Asp-8 acts as the Proton acceptor in catalysis. Asp-130 (proton donor) is an active-site residue.

This sequence belongs to the HisA/HisF family.

The protein localises to the cytoplasm. It catalyses the reaction 1-(5-phospho-beta-D-ribosyl)-5-[(5-phospho-beta-D-ribosylamino)methylideneamino]imidazole-4-carboxamide = 5-[(5-phospho-1-deoxy-D-ribulos-1-ylimino)methylamino]-1-(5-phospho-beta-D-ribosyl)imidazole-4-carboxamide. It participates in amino-acid biosynthesis; L-histidine biosynthesis; L-histidine from 5-phospho-alpha-D-ribose 1-diphosphate: step 4/9. The chain is 1-(5-phosphoribosyl)-5-[(5-phosphoribosylamino)methylideneamino] imidazole-4-carboxamide isomerase from Marinobacter nauticus (strain ATCC 700491 / DSM 11845 / VT8) (Marinobacter aquaeolei).